Here is a 362-residue protein sequence, read N- to C-terminus: Cobalt-precorrin-5B C(1)-methyltransferase (362 aa).

This sequence belongs to the CbiD family.

It catalyses the reaction Co-precorrin-5B + S-adenosyl-L-methionine = Co-precorrin-6A + S-adenosyl-L-homocysteine. Its pathway is cofactor biosynthesis; adenosylcobalamin biosynthesis; cob(II)yrinate a,c-diamide from sirohydrochlorin (anaerobic route): step 6/10. Catalyzes the methylation of C-1 in cobalt-precorrin-5B to form cobalt-precorrin-6A. The polypeptide is Cobalt-precorrin-5B C(1)-methyltransferase (Burkholderia thailandensis (strain ATCC 700388 / DSM 13276 / CCUG 48851 / CIP 106301 / E264)).